We begin with the raw amino-acid sequence, 185 residues long: Photosystem I assembly protein Ycf4 (185 aa).

Transmembrane regions (helical) follow at residues 20–40 (GNFF…AVGA) and 57–77 (ILFF…LFIS).

Belongs to the Ycf4 family.

It localises to the plastid. It is found in the chloroplast thylakoid membrane. Seems to be required for the assembly of the photosystem I complex. The polypeptide is Photosystem I assembly protein Ycf4 (Sorghum bicolor (Sorghum)).